The sequence spans 271 residues: Coiled-coil domain-containing protein ORF29 (271 aa).

Positions 1–39 (MNEKTESEIFEEQNSLYKPIKQEKKTPSTPESEDKNDQS) are disordered. The segment covering 20–37 (IKQEKKTPSTPESEDKND) has biased composition (basic and acidic residues). Positions 208–228 (RATQTQEILLNSLRKNLQMLE) form a coiled coil.

This Helicobacter pylori (strain 35A) protein is Coiled-coil domain-containing protein ORF29.